Consider the following 529-residue polypeptide: Peptide chain release factor 3 (529 aa).

The tr-type G domain occupies 11-280; that stretch reads SKRRTFAIIS…GLTDWAPAPL (270 aa). Residues 20–27, 88–92, and 142–145 contribute to the GTP site; these read SHPDAGKT, DTPGH, and NKLD.

Belongs to the TRAFAC class translation factor GTPase superfamily. Classic translation factor GTPase family. PrfC subfamily.

The protein localises to the cytoplasm. Functionally, increases the formation of ribosomal termination complexes and stimulates activities of RF-1 and RF-2. It binds guanine nucleotides and has strong preference for UGA stop codons. It may interact directly with the ribosome. The stimulation of RF-1 and RF-2 is significantly reduced by GTP and GDP, but not by GMP. In Vibrio vulnificus (strain YJ016), this protein is Peptide chain release factor 3.